We begin with the raw amino-acid sequence, 30 residues long: Glutathione S-transferase (30 aa).

The protein belongs to the GST superfamily. Monomer and homodimer.

It is found in the cytoplasm. It catalyses the reaction RX + glutathione = an S-substituted glutathione + a halide anion + H(+). Conjugation of reduced glutathione to a wide number of exogenous and endogenous hydrophobic electrophiles. This is Glutathione S-transferase from Pseudomonas fluorescens.